The sequence spans 271 residues: uncharacterized protein (271 aa).

The protein belongs to the metallo-dependent hydrolases superfamily. Peptidase M19 family.

This is an uncharacterized protein from Klebsiella pneumoniae.